Reading from the N-terminus, the 232-residue chain is 7-cyano-7-deazaguanine synthase (232 aa).

8-18 (FSGGQDSTTCL) contributes to the ATP binding site. The Zn(2+) site is built by Cys-187, Cys-196, Cys-199, and Cys-202.

Belongs to the QueC family. It depends on Zn(2+) as a cofactor.

The catalysed reaction is 7-carboxy-7-deazaguanine + NH4(+) + ATP = 7-cyano-7-deazaguanine + ADP + phosphate + H2O + H(+). Its pathway is purine metabolism; 7-cyano-7-deazaguanine biosynthesis. Functionally, catalyzes the ATP-dependent conversion of 7-carboxy-7-deazaguanine (CDG) to 7-cyano-7-deazaguanine (preQ(0)). The sequence is that of 7-cyano-7-deazaguanine synthase from Vibrio vulnificus (strain YJ016).